The following is a 375-amino-acid chain: Queuine tRNA-ribosyltransferase (375 aa).

Asp-94 acts as the Proton acceptor in catalysis. Substrate contacts are provided by residues 94–98 (DSGGF), Asp-148, Gln-191, and Gly-218. The interval 249–255 (GVGSPDD) is RNA binding. Asp-268 functions as the Nucleophile in the catalytic mechanism. The tract at residues 273-277 (TRIAR) is RNA binding; important for wobble base 34 recognition. Zn(2+) is bound by residues Cys-306, Cys-308, Cys-311, and His-337.

The protein belongs to the queuine tRNA-ribosyltransferase family. Homodimer. Within each dimer, one monomer is responsible for RNA recognition and catalysis, while the other monomer binds to the replacement base PreQ1. Requires Zn(2+) as cofactor.

It carries out the reaction 7-aminomethyl-7-carbaguanine + guanosine(34) in tRNA = 7-aminomethyl-7-carbaguanosine(34) in tRNA + guanine. It functions in the pathway tRNA modification; tRNA-queuosine biosynthesis. Its function is as follows. Catalyzes the base-exchange of a guanine (G) residue with the queuine precursor 7-aminomethyl-7-deazaguanine (PreQ1) at position 34 (anticodon wobble position) in tRNAs with GU(N) anticodons (tRNA-Asp, -Asn, -His and -Tyr). Catalysis occurs through a double-displacement mechanism. The nucleophile active site attacks the C1' of nucleotide 34 to detach the guanine base from the RNA, forming a covalent enzyme-RNA intermediate. The proton acceptor active site deprotonates the incoming PreQ1, allowing a nucleophilic attack on the C1' of the ribose to form the product. After dissociation, two additional enzymatic reactions on the tRNA convert PreQ1 to queuine (Q), resulting in the hypermodified nucleoside queuosine (7-(((4,5-cis-dihydroxy-2-cyclopenten-1-yl)amino)methyl)-7-deazaguanosine). The sequence is that of Queuine tRNA-ribosyltransferase from Thermoanaerobacter pseudethanolicus (strain ATCC 33223 / 39E) (Clostridium thermohydrosulfuricum).